A 266-amino-acid polypeptide reads, in one-letter code: NADP-dependent mannitol dehydrogenase (266 aa).

Positions 53, 107, and 140 each coordinate NADP(+). Ser-159 acts as the Proton donor in catalysis. NADP(+) is bound by residues Tyr-174, Lys-178, Ile-206, and Thr-208. The active-site Proton acceptor is Tyr-174. The active-site Lowers pKa of active site Tyr is the Lys-178.

It belongs to the short-chain dehydrogenases/reductases (SDR) family. As to quaternary structure, homotetramer.

It carries out the reaction D-mannitol + NADP(+) = D-fructose + NADPH + H(+). In terms of biological role, D-mannitol 2-dehydrogenase which is not necessary for D-mannitol catabolism. D-mannitol metabolism occurs via at least two different routes involving mannitol dehydrogenase (MDH) or mannitol 1-phosphate dehydrogenase, and the exact physiological role of mannitol dehydrogenases remains unclear. This is NADP-dependent mannitol dehydrogenase from Hypocrea jecorina (strain ATCC 56765 / BCRC 32924 / NRRL 11460 / Rut C-30) (Trichoderma reesei).